Consider the following 188-residue polypeptide: Peptidyl-tRNA hydrolase (188 aa).

Position 14 (Tyr-14) interacts with tRNA. The Proton acceptor role is filled by His-19. Positions 64, 66, and 112 each coordinate tRNA.

The protein belongs to the PTH family. As to quaternary structure, monomer.

The protein resides in the cytoplasm. The catalysed reaction is an N-acyl-L-alpha-aminoacyl-tRNA + H2O = an N-acyl-L-amino acid + a tRNA + H(+). Hydrolyzes ribosome-free peptidyl-tRNAs (with 1 or more amino acids incorporated), which drop off the ribosome during protein synthesis, or as a result of ribosome stalling. Its function is as follows. Catalyzes the release of premature peptidyl moieties from peptidyl-tRNA molecules trapped in stalled 50S ribosomal subunits, and thus maintains levels of free tRNAs and 50S ribosomes. The chain is Peptidyl-tRNA hydrolase from Clostridium perfringens (strain SM101 / Type A).